Here is a 145-residue protein sequence, read N- to C-terminus: uncharacterized protein (145 aa).

The protein belongs to the methyltransferase superfamily.

In terms of biological role, probable methyltransferase. This is an uncharacterized protein from Schizosaccharomyces pombe (strain 972 / ATCC 24843) (Fission yeast).